Reading from the N-terminus, the 306-residue chain is Glutaminase (306 aa).

The substrate site is built by Ser64, Asn115, Glu159, Asn166, Tyr190, Tyr242, and Val260.

This sequence belongs to the glutaminase family. In terms of assembly, homotetramer.

The catalysed reaction is L-glutamine + H2O = L-glutamate + NH4(+). The protein is Glutaminase of Vibrio cholerae serotype O1 (strain ATCC 39315 / El Tor Inaba N16961).